A 269-amino-acid polypeptide reads, in one-letter code: 4-hydroxy-tetrahydrodipicolinate reductase (269 aa).

NAD(+)-binding positions include 11–16 (GGSGRM) and E37. R38 is an NADP(+) binding site. NAD(+) is bound by residues 101–103 (GTT) and 125–128 (AGNM). H158 functions as the Proton donor/acceptor in the catalytic mechanism. Residue H159 participates in (S)-2,3,4,5-tetrahydrodipicolinate binding. K162 serves as the catalytic Proton donor. 168–169 (GT) is a binding site for (S)-2,3,4,5-tetrahydrodipicolinate.

Belongs to the DapB family.

It localises to the cytoplasm. It catalyses the reaction (S)-2,3,4,5-tetrahydrodipicolinate + NAD(+) + H2O = (2S,4S)-4-hydroxy-2,3,4,5-tetrahydrodipicolinate + NADH + H(+). The catalysed reaction is (S)-2,3,4,5-tetrahydrodipicolinate + NADP(+) + H2O = (2S,4S)-4-hydroxy-2,3,4,5-tetrahydrodipicolinate + NADPH + H(+). Its pathway is amino-acid biosynthesis; L-lysine biosynthesis via DAP pathway; (S)-tetrahydrodipicolinate from L-aspartate: step 4/4. Its function is as follows. Catalyzes the conversion of 4-hydroxy-tetrahydrodipicolinate (HTPA) to tetrahydrodipicolinate. The protein is 4-hydroxy-tetrahydrodipicolinate reductase of Dinoroseobacter shibae (strain DSM 16493 / NCIMB 14021 / DFL 12).